Here is an 875-residue protein sequence, read N- to C-terminus: Metal transporter CNNM2 (875 aa).

The Extracellular portion of the chain corresponds to 1–250 (MIGCGACEPE…TKMIVGEEKK (250 aa)). The N-linked (GlcNAc...) asparagine glycan is linked to asparagine 112. The interval 122–148 (EHERRRHTPGERGLGGPAPPEPDSGPQ) is disordered. Residues 251-271 (FLLPFWLQVIFISLLLCLSGM) traverse the membrane as a helical segment. One can recognise a CNNM transmembrane domain in the interval 251-431 (FLLPFWLQVI…DPYNDLVKEE (181 aa)). Residues 272–313 (FSGLNLGLMALDPMELRIVQNCGTEKEKNYAKRIEPVRRQGN) are Cytoplasmic-facing. The helical intramembrane region spans 314-334 (YLLCSLLLGNVLVNTTLTILL). Over 335–338 (DDIA) the chain is Cytoplasmic. Residues 339 to 359 (GSGLVAVVVSTIGIVIFGEIV) traverse the membrane as a helical segment. Over 360–368 (PQAICSRHG) the chain is Extracellular. Residues 369–389 (LAVGANTIFLTKFFMMMTFPA) traverse the membrane as a helical segment. The Cytoplasmic portion of the chain corresponds to 390 to 875 (SYPVSKLLDC…NHSLHSEGAI (486 aa)). CBS domains lie at 450–511 (MTPL…CTPL) and 518–584 (YNHP…ILDE). The disordered stretch occupies residues 741–763 (AGSPGENKSPPRPCGLNHSDSLS). The residue at position 761 (serine 761) is a Phosphoserine.

This sequence belongs to the ACDP family.

It localises to the cell membrane. Its function is as follows. Divalent metal cation transporter. Mediates transport of divalent metal cations in an order of Mg(2+) &gt; Co(2+) &gt; Mn(2+) &gt; Sr(2+) &gt; Ba(2+) &gt; Cu(2+) &gt; Fe(2+). This is Metal transporter CNNM2 (Cnnm2) from Rattus norvegicus (Rat).